The chain runs to 156 residues: Arginine repressor (156 aa).

It belongs to the ArgR family.

The protein localises to the cytoplasm. It participates in amino-acid biosynthesis; L-arginine biosynthesis [regulation]. Functionally, regulates arginine biosynthesis genes. This is Arginine repressor from Shewanella halifaxensis (strain HAW-EB4).